A 422-amino-acid chain; its full sequence is Serine hydroxymethyltransferase (422 aa).

Residues Leu-121 and 125–127 (GHL) contribute to the (6S)-5,6,7,8-tetrahydrofolate site. An N6-(pyridoxal phosphate)lysine modification is found at Lys-230. Position 355–357 (355–357 (SPF)) interacts with (6S)-5,6,7,8-tetrahydrofolate.

Belongs to the SHMT family. Homodimer. Pyridoxal 5'-phosphate serves as cofactor.

It is found in the cytoplasm. The enzyme catalyses (6R)-5,10-methylene-5,6,7,8-tetrahydrofolate + glycine + H2O = (6S)-5,6,7,8-tetrahydrofolate + L-serine. It participates in one-carbon metabolism; tetrahydrofolate interconversion. The protein operates within amino-acid biosynthesis; glycine biosynthesis; glycine from L-serine: step 1/1. Its function is as follows. Catalyzes the reversible interconversion of serine and glycine with tetrahydrofolate (THF) serving as the one-carbon carrier. This reaction serves as the major source of one-carbon groups required for the biosynthesis of purines, thymidylate, methionine, and other important biomolecules. Also exhibits THF-independent aldolase activity toward beta-hydroxyamino acids, producing glycine and aldehydes, via a retro-aldol mechanism. The chain is Serine hydroxymethyltransferase from Teredinibacter turnerae (strain ATCC 39867 / T7901).